Here is a 484-residue protein sequence, read N- to C-terminus: Zinc metalloproteinase-disintegrin stejnitin (484 aa).

The first 20 residues, 1 to 20 (MIQVLLVTICLAVFPYQGNS), serve as a signal peptide directing secretion. A propeptide spanning residues 21–192 (IILESGNVND…ASQLNLTPDE (172 aa)) is cleaved from the precursor. Gln193 carries the post-translational modification Pyrrolidone carboxylic acid. The 199-residue stretch at 194–392 (RFIELVIVAD…YTSRCLYNGP (199 aa)) folds into the Peptidase M12B domain. Glu197 serves as a coordination point for Ca(2+). A glycan (N-linked (GlcNAc...) asparagine) is linked at Asn254. Residue Asp281 coordinates Ca(2+). 3 disulfides stabilise this stretch: Cys305–Cys387, Cys345–Cys369, and Cys347–Cys352. His330, His334, and His340 together coordinate Zn(2+). Ca(2+)-binding residues include Cys387, Asn390, Val402, Asn405, Glu409, Glu412, and Asp415. One can recognise a Disintegrin domain in the interval 400-484 (PPVCGNYYVE…GDCPRNPFRA (85 aa)). 7 disulfide bridges follow: Cys403–Cys422, Cys414–Cys432, Cys416–Cys427, Cys426–Cys449, Cys440–Cys446, Cys445–Cys470, and Cys458–Cys477. Residues 462 to 464 (KGD) carry the Cell attachment site motif.

The protein belongs to the venom metalloproteinase (M12B) family. P-II subfamily. P-IIb sub-subfamily. Zn(2+) serves as cofactor. Post-translationally, the N-terminus is blocked. As to expression, expressed by the venom gland.

It localises to the secreted. Its function is as follows. Snake venom zinc metalloproteinase that inhibits ADP-induced platelet aggregation in human platelet-rich plasma (IC(50) is 175 nM) and cleaves alpha-(FGA) and subsequently the beta-chain (FGG) of bovine fibrinogen, leaving the gamma-chain unaffected. It is also able to inhibit proliferatin of ECV304 cells by inducing apoptosis of these cells. The polypeptide is Zinc metalloproteinase-disintegrin stejnitin (Trimeresurus stejnegeri (Chinese green tree viper)).